A 334-amino-acid chain; its full sequence is MKETIAYLGMGMWGFSLANLLANNGHRVVGWARNPALIEQLSVQRRHPAAPHISIPQNLSFTSHMEEALDGATMIVEGVTSAGMRPVLTQLKALTELRVPLVITSKGIEQNTGLLLSEIALEIFGRPAAQHLGYLSGPSIASEVLRGCPCSVVISAYNPDTLKQIHRAFLTPTFRVYPNSDLKGVALGGALKNVIAIACGISDGFRFGDNAKSGLVTRGLHEIRKFATIMGCRPDTLNGLAGLGDLCTTCFSAFSRNTLFGKLLAEGLTPEQAKTKIGMVVEGVYTALSAHQIATHHRIDMPITTSVYRVLYENLDIQEGIAQLLQRDTKEEYL.

Residues tryptophan 13, arginine 33, and lysine 106 each contribute to the NADPH site. 3 residues coordinate sn-glycerol 3-phosphate: lysine 106, glycine 137, and serine 139. An NADPH-binding site is contributed by alanine 141. Sn-glycerol 3-phosphate-binding residues include lysine 192, aspartate 245, serine 255, arginine 256, and asparagine 257. The Proton acceptor role is filled by lysine 192. Arginine 256 is an NADPH binding site. 2 residues coordinate NADPH: valine 280 and glutamate 282.

It belongs to the NAD-dependent glycerol-3-phosphate dehydrogenase family.

The protein localises to the cytoplasm. It catalyses the reaction sn-glycerol 3-phosphate + NAD(+) = dihydroxyacetone phosphate + NADH + H(+). The enzyme catalyses sn-glycerol 3-phosphate + NADP(+) = dihydroxyacetone phosphate + NADPH + H(+). It participates in membrane lipid metabolism; glycerophospholipid metabolism. In terms of biological role, catalyzes the reduction of the glycolytic intermediate dihydroxyacetone phosphate (DHAP) to sn-glycerol 3-phosphate (G3P), the key precursor for phospholipid synthesis. In Chlamydia trachomatis serovar L2b (strain UCH-1/proctitis), this protein is Glycerol-3-phosphate dehydrogenase [NAD(P)+].